The primary structure comprises 251 residues: DNA repair protein RecO (251 aa).

This sequence belongs to the RecO family.

Functionally, involved in DNA repair and RecF pathway recombination. The sequence is that of DNA repair protein RecO from Streptococcus mutans serotype c (strain ATCC 700610 / UA159).